The chain runs to 180 residues: Large ribosomal subunit protein uL5 (180 aa).

Belongs to the universal ribosomal protein uL5 family. Part of the 50S ribosomal subunit; part of the 5S rRNA/L5/L18/L25 subcomplex. Contacts the 5S rRNA and the P site tRNA. Forms a bridge to the 30S subunit in the 70S ribosome.

Its function is as follows. This is one of the proteins that bind and probably mediate the attachment of the 5S RNA into the large ribosomal subunit, where it forms part of the central protuberance. In the 70S ribosome it contacts protein S13 of the 30S subunit (bridge B1b), connecting the 2 subunits; this bridge is implicated in subunit movement. Contacts the P site tRNA; the 5S rRNA and some of its associated proteins might help stabilize positioning of ribosome-bound tRNAs. In Chlamydia pneumoniae (Chlamydophila pneumoniae), this protein is Large ribosomal subunit protein uL5.